We begin with the raw amino-acid sequence, 474 residues long: Variant surface glycoprotein MITAT 1.5 (474 aa).

The signal sequence occupies residues 1–22 (MIHSNKVATVVLALISSWPADG). Intrachain disulfides connect C37–C161 and C144–C214. N-linked (GlcNAc...) asparagine glycosylation is found at N74 and N95. A glycan (N-linked (GlcNAc...) asparagine) is linked at N329. Residues 388–449 (AKDGEGQKNQ…ETDEPDKEKC (62 aa)) form a disordered region. Basic and acidic residues-rich tracts occupy residues 414–423 (TNKEACEKEN) and 435–449 (KGKD…KEKC). A lipid anchor (GPI-anchor amidated asparagine) is attached at N451. A propeptide spans 452–474 (GSFLTSKQFAFSVVSAAFMALLF) (removed in mature form).

The protein resides in the cell membrane. VSG forms a coat on the surface of the parasite. The trypanosome evades the immune response of the host by expressing a series of antigenically distinct VSGs from an estimated 1000 VSG genes. This chain is Variant surface glycoprotein MITAT 1.5, found in Trypanosoma brucei brucei.